The following is a 276-amino-acid chain: Rhomboid protease GlpG (276 aa).

A run of 6 helical transmembrane segments spans residues 94–114 (GPVT…MSLI), 142–162 (IFMH…WYLG), 169–189 (LGSG…GYVQ), 192–212 (FSGP…GYVW), 229–249 (LIIF…GMSM), and 250–270 (ANGA…VDTL). Ser-201 functions as the Nucleophile in the catalytic mechanism. His-254 is an active-site residue.

This sequence belongs to the peptidase S54 family.

It localises to the cell inner membrane. It catalyses the reaction Cleaves type-1 transmembrane domains using a catalytic dyad composed of serine and histidine that are contributed by different transmembrane domains.. Rhomboid-type serine protease that catalyzes intramembrane proteolysis. This Salmonella agona (strain SL483) protein is Rhomboid protease GlpG.